Here is a 269-residue protein sequence, read N- to C-terminus: Thiazole synthase (269 aa).

K109 serves as the catalytic Schiff-base intermediate with DXP. 1-deoxy-D-xylulose 5-phosphate is bound by residues G170, 196-197 (AG), and 218-219 (NT).

The protein belongs to the ThiG family. Homotetramer. Forms heterodimers with either ThiH or ThiS.

The protein localises to the plastid. It is found in the chloroplast. The catalysed reaction is [ThiS sulfur-carrier protein]-C-terminal-Gly-aminoethanethioate + 2-iminoacetate + 1-deoxy-D-xylulose 5-phosphate = [ThiS sulfur-carrier protein]-C-terminal Gly-Gly + 2-[(2R,5Z)-2-carboxy-4-methylthiazol-5(2H)-ylidene]ethyl phosphate + 2 H2O + H(+). Its pathway is cofactor biosynthesis; thiamine diphosphate biosynthesis. Its function is as follows. Catalyzes the rearrangement of 1-deoxy-D-xylulose 5-phosphate (DXP) to produce the thiazole phosphate moiety of thiamine. Sulfur is provided by the thiocarboxylate moiety of the carrier protein ThiS. In vitro, sulfur can be provided by H(2)S. This is Thiazole synthase from Phaeodactylum tricornutum (strain CCAP 1055/1).